The chain runs to 113 residues: Large ribosomal subunit protein uL24 (113 aa).

Belongs to the universal ribosomal protein uL24 family. As to quaternary structure, part of the 50S ribosomal subunit.

In terms of biological role, one of two assembly initiator proteins, it binds directly to the 5'-end of the 23S rRNA, where it nucleates assembly of the 50S subunit. Functionally, one of the proteins that surrounds the polypeptide exit tunnel on the outside of the subunit. This is Large ribosomal subunit protein uL24 from Rickettsia prowazekii (strain Madrid E).